Reading from the N-terminus, the 318-residue chain is Acetyl-coenzyme A carboxylase carboxyl transferase subunit alpha (318 aa).

The region spanning 38–292 is the CoA carboxyltransferase C-terminal domain; the sequence is KLEKRLAKLE…NKTITKSLHA (255 aa).

Belongs to the AccA family. As to quaternary structure, acetyl-CoA carboxylase is a heterohexamer composed of biotin carboxyl carrier protein (AccB), biotin carboxylase (AccC) and two subunits each of ACCase subunit alpha (AccA) and ACCase subunit beta (AccD).

Its subcellular location is the cytoplasm. It carries out the reaction N(6)-carboxybiotinyl-L-lysyl-[protein] + acetyl-CoA = N(6)-biotinyl-L-lysyl-[protein] + malonyl-CoA. Its pathway is lipid metabolism; malonyl-CoA biosynthesis; malonyl-CoA from acetyl-CoA: step 1/1. Component of the acetyl coenzyme A carboxylase (ACC) complex. First, biotin carboxylase catalyzes the carboxylation of biotin on its carrier protein (BCCP) and then the CO(2) group is transferred by the carboxyltransferase to acetyl-CoA to form malonyl-CoA. In Listeria innocua serovar 6a (strain ATCC BAA-680 / CLIP 11262), this protein is Acetyl-coenzyme A carboxylase carboxyl transferase subunit alpha.